A 252-amino-acid polypeptide reads, in one-letter code: Ribosomal RNA small subunit methyltransferase J (252 aa).

Residues 101-102 (RD), 117-118 (ER), 153-154 (SS), and aspartate 171 each bind S-adenosyl-L-methionine.

This sequence belongs to the methyltransferase superfamily. RsmJ family.

Its subcellular location is the cytoplasm. The enzyme catalyses guanosine(1516) in 16S rRNA + S-adenosyl-L-methionine = N(2)-methylguanosine(1516) in 16S rRNA + S-adenosyl-L-homocysteine + H(+). Its function is as follows. Specifically methylates the guanosine in position 1516 of 16S rRNA. In Citrobacter koseri (strain ATCC BAA-895 / CDC 4225-83 / SGSC4696), this protein is Ribosomal RNA small subunit methyltransferase J.